A 305-amino-acid chain; its full sequence is N-acetylmuramic acid 6-phosphate etherase (305 aa).

An SIS domain is found at 59-222 (TSKALGKGGR…STGVMVKLGK (164 aa)). Glu-87 functions as the Proton donor in the catalytic mechanism. Residue Glu-118 is part of the active site.

This sequence belongs to the GCKR-like family. MurNAc-6-P etherase subfamily. In terms of assembly, homodimer.

It catalyses the reaction N-acetyl-D-muramate 6-phosphate + H2O = N-acetyl-D-glucosamine 6-phosphate + (R)-lactate. It functions in the pathway amino-sugar metabolism; N-acetylmuramate degradation. Specifically catalyzes the cleavage of the D-lactyl ether substituent of MurNAc 6-phosphate, producing GlcNAc 6-phosphate and D-lactate. This is N-acetylmuramic acid 6-phosphate etherase from Crocosphaera subtropica (strain ATCC 51142 / BH68) (Cyanothece sp. (strain ATCC 51142)).